Here is a 1425-residue protein sequence, read N- to C-terminus: Zinc finger FYVE domain-containing protein 9 (1425 aa).

Disordered regions lie at residues 201–255 (ESTE…IGRD) and 291–352 (EDLT…SGRN). The segment covering 202 to 225 (STEKDMNSEKQMDPLNRPKTEGRS) has biased composition (basic and acidic residues). Polar residues-rich tracts occupy residues 230–245 (CPTSSDSLASVCSPSQ) and 296–312 (KISSPRTDLGSPNSFSH). Phosphoserine occurs at positions 306 and 668. An FYVE-type zinc finger spans residues 699 to 758 (DSQAPNCMKCEARFTFTKRRHHCRACGKVFCASCCSLKCKLLYMDRKEARVCVICHSVLM). Zn(2+) contacts are provided by cysteine 705, cysteine 708, cysteine 721, cysteine 724, cysteine 729, cysteine 732, cysteine 750, and cysteine 753. The segment at 767 to 823 (MSASSQSPNPNNPAEYCSTIPPLQQAQASGALSSPPPTVMVPVGVLKHPGAEVAQPR) is SBD.

As to quaternary structure, interacts (via the SBD region) with SMAD2; the interaction recruits SMAD2 to the TGF-beta receptor and is disrupted by phosphorylation of SMAD2 upon TGF-beta receptor activation. Interacts with SMAD3. Interacts with TGFBR1 and TGFBR2; the interaction recruits SMAD2 to the TGF-beta receptor. Interacts with PML. As to expression, ubiquitous. In the brain found primarily in the cerebrovascular smooth muscle cells and reactive astrocytes.

It localises to the cytoplasm. The protein localises to the early endosome membrane. In terms of biological role, early endosomal protein that functions to recruit SMAD2/SMAD3 to intracellular membranes and to the TGF-beta receptor. Plays a significant role in TGF-mediated signaling by regulating the subcellular location of SMAD2 and SMAD3 and modulating the transcriptional activity of the SMAD3/SMAD4 complex. Possibly associated with TGF-beta receptor internalization. The chain is Zinc finger FYVE domain-containing protein 9 (ZFYVE9) from Homo sapiens (Human).